The primary structure comprises 210 residues: MRTNIVIPMKDPQLSKTRLDPQLSSRQRQALALSMFKTTLSFFNKYFPQHHLLVVTASEFISDIACTYGASVLIETKLGLRQAVESAARWSLNNDFQSQLLIPADIAELDYREFERLLMIYRPVPSVLLCPAFDLGTNALLTTPPNAIPFLYGIDSSLAHQRVAQERDIVCQVIKLPALALDIDTPDDLELLALLSSPVTQELNKLCKTA.

The protein belongs to the CofC family.

The enzyme catalyses (2R)-3-phosphoglycerate + GTP + H(+) = 3-[(R)-glyceryl]-diphospho-5'-guanosine + diphosphate. Its pathway is cofactor biosynthesis; coenzyme F420 biosynthesis. In terms of biological role, guanylyltransferase that catalyzes the activation of (2R)-3-phosphoglycerate (3PG) as 3-[(R)-glyceryl]-diphospho-5'-guanosine, via the condensation of 3PG with GTP. It is involved in the biosynthesis of a derivative of the hydride carrier cofactor coenzyme F420, 3PG-F420. The sequence is that of 3-phospho-D-glycerate guanylyltransferase from Colwellia psychrerythraea (strain 34H / ATCC BAA-681) (Vibrio psychroerythus).